A 2178-amino-acid polypeptide reads, in one-letter code: DNA-directed RNA polymerase subunit beta (2178 aa).

3 insert regions span residues 269–325, 714–1508, and 1703–1900; these read SKKI…TPFV, KRID…LFYN, and KGND…LQPM.

This sequence belongs to the RNA polymerase beta chain family. In plastids the minimal PEP RNA polymerase catalytic core is composed of four subunits: alpha, beta, beta', and beta''. When a (nuclear-encoded) sigma factor is associated with the core the holoenzyme is formed, which can initiate transcription.

The protein localises to the plastid. It is found in the chloroplast. It carries out the reaction RNA(n) + a ribonucleoside 5'-triphosphate = RNA(n+1) + diphosphate. Functionally, DNA-dependent RNA polymerase catalyzes the transcription of DNA into RNA using the four ribonucleoside triphosphates as substrates. The polypeptide is DNA-directed RNA polymerase subunit beta (Tupiella akineta (Green alga)).